The chain runs to 292 residues: Fat storage-inducing transmembrane protein 1 (292 aa).

At 1–18 (MERGPVVGAGLGAGARIQ) the chain is on the lumenal side. Residues 19–39 (ALLGCLLKVLLWVASALLYFG) form a helical membrane-spanning segment. The Cytoplasmic portion of the chain corresponds to 40-54 (SEQAARLLGSPCLRR). The chain crosses the membrane as a helical span at residues 55-75 (LYHAWLAAVVIFGPLLQFHVN). Over 76–94 (PRTIFASHGNFFNIKFVNS) the chain is Lumenal. Residues 95 to 115 (AWGWTCTFLGGFVLLVVFLAT) form a helical membrane-spanning segment. At 116 to 141 (RRVAVTARHLSRLVVGAAVWRGAGRA) the chain is on the cytoplasmic side. A helical transmembrane segment spans residues 142–162 (FLLIEDLTGSCFEPLPQGLLL). Residues 163–187 (HELPDRRSCLAAGHQWRGYTVSSHT) are Lumenal-facing. Residue His186 is part of the active site. A helical transmembrane segment spans residues 188-208 (FLLTFCCLLMAEEAAVFAKYL). At 209-220 (AHGLPAGAPLRL) the chain is on the cytoplasmic side. Residues 221 to 241 (VFLLNVLLLGLWNFLLLCTVI) traverse the membrane as a helical segment. The Lumenal segment spans residues 242 to 249 (YFHQYTHK). The active site involves His244. A helical transmembrane segment spans residues 250–270 (VVGAAVGTFAWYLTYGSWYHQ). The Cytoplasmic portion of the chain corresponds to 271-292 (PWSPGSPGHGLFPRPHSSRKHN).

This sequence belongs to the FIT family. FIT1 subfamily. As to expression, primarily expressed in heart and skeletal muscle.

It is found in the endoplasmic reticulum membrane. Its function is as follows. Plays an important role in the formation of lipid droplets (LDs) which are storage organelles at the center of lipid and energy homeostasis. Directly binds to diacylglycerol (DAGs) and triacylglycerol. This Homo sapiens (Human) protein is Fat storage-inducing transmembrane protein 1.